The sequence spans 1009 residues: MTGHTGDVSQVHDIEILALNPTVNKHATFKPTIVSKKDKENWARLDHCKKGCELKNDFEDVKPTTLTERGALFESARCLKCADAPCQKGCPTQLDIKSFISSISTKNYYGAAKTIFSDNPLGLTCGMVCPVSSLCQYGCNLAATEEGPINIGGLQQFATEVFKKMNIPQIRDPSLTPLSQLPESYKAKIALIGCGPTSISCATFLGRLGYTDVTIFEKEQYLGGLSSSEIPNYRLNYEVVEFEIKLMKDLGVKVEYGKRLGENGFTVESLQKQGYEAIYLGIGMPEPKIDPVFNELTSDQGFFSSKEFLPKVSKASKAGMCGCKSQLPQLNGRVIVLGAGDTAFDCATSAFRCGASRVTVCFRRGFSDMRAVPEEVDIAKDERCEFLPYVLPKQVIKRDGKVVAMEFYKTEKGDDGNYSVDEDQFFRVKCDYIISAFGSQIGSVAESCSPLQFNKWGTADIDPMTMTSKHAEWLFCGGDLVGNGTTVEAVNDGKTASWNIHKYLQSLHGIPIPDGPPQLPNFFTPIDLVDISVEMCGMKFPNPFGLASATPATSAAMIRRSFEQGWGFAVTKTFSLDKDLVTNVSPRIVRGTTSGHHFGPGQGAFLNIELISEKTCHYWCKAIGELKRDFPDRIVIASIMCGFNKEDWTQLAKMAEASGADGIELNLSCPHGMGEKGMGLACGQDTELVFHICQWVRAATRLPFFAKLTPNVTEIKEIAKAAHDGGADGVTAINTVSGLMGLKGDSNAWPAIGDEKRTTYGGVSGNATRPIALRAVSSIRKSLPDYPIMATGGADSADATIQFLHCGASVVQICSSVQNQDFTVVQDYITGLKTYLYMQSREDLLQWDGQSPPNEIINKNPKLKGLPKFGKYLLERNRIDTEEKQNIDLQKVKNPLVPSPNPTHPVPSLKDQINRAIPRIGRHDDLKRDQQVVALIDEDKCINCGKCYMTCNDSGYQAIKFDGKTHIPLVTDLCTGCDLCLSVCPVPDCITMVPRETIYVPDRGLTVQN.

The 4Fe-4S ferredoxin-type 1 domain maps to 69 to 99 (RGALFESARCLKCADAPCQKGCPTQLDIKSF). Cysteine 78, cysteine 81, cysteine 86, and cysteine 90 together coordinate [4Fe-4S] cluster. Position 128 (valine 128) interacts with FAD. Cysteine 129, cysteine 135, cysteine 139, and glutamine 155 together coordinate [4Fe-4S] cluster. FAD is bound by residues 193–197 (GCGPT), 217–225 (EKEQYLGGL), arginine 234, and leucine 260. NADP(+) is bound by residues 339 to 342 (AGDT), 363 to 364 (RR), arginine 370, 436 to 438 (AFG), and 479 to 484 (DLVGNG). 478-486 (GDLVGNGTT) provides a ligand contact to FAD. FMN is bound by residues serine 548 and 572–573 (KT). Residues asparagine 607 and 666 to 668 (NLS) contribute to the substrate site. Catalysis depends on cysteine 669, which acts as the Proton acceptor. Lysine 707 contacts FMN. 734–735 (NT) lines the substrate pocket. Residues glycine 765, 791-793 (TGG), and 814-815 (CS) contribute to the FMN site. 4Fe-4S ferredoxin-type domains follow at residues 932–964 (VVAL…FDGK) and 965–995 (THIP…MVPR). Residues cysteine 941, cysteine 944, cysteine 947, cysteine 951, cysteine 974, cysteine 977, cysteine 980, and cysteine 984 each coordinate [4Fe-4S] cluster.

It belongs to the dihydropyrimidine dehydrogenase family. Homodimer. [4Fe-4S] cluster is required as a cofactor. The cofactor is FAD. FMN serves as cofactor.

Its subcellular location is the cytoplasm. The enzyme catalyses 5,6-dihydrouracil + NADP(+) = uracil + NADPH + H(+). It functions in the pathway amino-acid biosynthesis; beta-alanine biosynthesis. Functionally, involved in pyrimidine base degradation. Catalyzes the reduction of uracil and thymine. This is Dihydropyrimidine dehydrogenase [NADP(+)] (pyd1) from Dictyostelium discoideum (Social amoeba).